A 397-amino-acid polypeptide reads, in one-letter code: Pentatricopeptide repeat-containing protein At1g80150, mitochondrial (397 aa).

A mitochondrion-targeting transit peptide spans 1 to 81 (MLSLRHIRRF…FAFEDTVSRL (81 aa)). PPR repeat units follow at residues 105 to 139 (REGFIVRIIMLYGKAGMTKQALDTFFNMDLYGCKR), 140 to 170 (SVKSFNAALQVLSFNPDLHTIWEFLHDAPSK), 176 to 210 (DAVSFNIAIKSFCELGILDGAYMAMREMEKSGLTP), 211 to 245 (DVVTYTTLISALYKHERCVIGNGLWNLMVLKGCKP), 246 to 280 (NLTTFNVRIQFLVNRRRAWDANDLLLLMPKLQVEP), 281 to 315 (DSITYNMVIKGFFLARFPDMAERVYTAMHGKGYKP), 316 to 350 (NLKIYQTMIHYLCKAGNFDLAYTMCKDCMRKKWYP), and 351 to 381 (NLDTVEMLLKGLVKKGQLDQAKSIMELVHRR).

Belongs to the PPR family. P subfamily.

It is found in the mitochondrion. The sequence is that of Pentatricopeptide repeat-containing protein At1g80150, mitochondrial from Arabidopsis thaliana (Mouse-ear cress).